A 363-amino-acid chain; its full sequence is MTKIYNLAILPGDGIGPELLQKDLNFKVLKEQYKLKINTTEYDIGGIAIDKYGKALPKETLDGCKESDSILFGSVGGPKWQHLPPDQQPERAALLPIRKYFNLFSNLRPAKLYSTLNHLSPLRRDISEKGFDILCVRELTGGIYFGKPKGYIKNIIDKKAFDTEIYYASEIKRIAHIGFKLAQNRKYKITSVDKANVLESSVLWRETVNTISKEYPDVKLSHLYIDHAAMQIIKNPDKFDVILTSNLFGDILSDECAMITGSIGMLPSASLNDSNFGLYEPAGGSAPDIAGKNIANPIAQILSIAMLVRYTMKLPMISDHIESAVIDTLKKGYRTLDIANDKEKYVSTNDIGDIISDILKKRI.

77–90 is an NAD(+) binding site; sequence GPKWQHLPPDQQPE. Residues Arg98, Arg108, Arg137, and Asp226 each contribute to the substrate site. Mg(2+) is bound by residues Asp226, Asp250, and Asp254. 284–296 serves as a coordination point for NAD(+); sequence GSAPDIAGKNIAN.

The protein belongs to the isocitrate and isopropylmalate dehydrogenases family. LeuB type 1 subfamily. In terms of assembly, homodimer. Mg(2+) serves as cofactor. It depends on Mn(2+) as a cofactor.

It localises to the cytoplasm. The enzyme catalyses (2R,3S)-3-isopropylmalate + NAD(+) = 4-methyl-2-oxopentanoate + CO2 + NADH. It functions in the pathway amino-acid biosynthesis; L-leucine biosynthesis; L-leucine from 3-methyl-2-oxobutanoate: step 3/4. Functionally, catalyzes the oxidation of 3-carboxy-2-hydroxy-4-methylpentanoate (3-isopropylmalate) to 3-carboxy-4-methyl-2-oxopentanoate. The product decarboxylates to 4-methyl-2 oxopentanoate. The chain is 3-isopropylmalate dehydrogenase from Buchnera aphidicola subsp. Pemphigus spyrothecae.